Here is a 709-residue protein sequence, read N- to C-terminus: Cell adhesion molecule CEACAM3 (709 aa).

An N-terminal signal peptide occupies residues 1 to 34; it reads MELSSVLPCKRCTPWRGLLLTASLLTCWLLPTTA. Ig-like V-type domains lie at 35 to 142, 155 to 262, 275 to 382, 393 to 500, and 509 to 616; these read QVSI…HVYF, QLSI…QVDT, QLTV…QVNT, LLTI…SVHT, and QLVI…HIYK. N-linked (GlcNAc...) asparagine glycans are attached at residues Asn73, Asn86, Asn103, Asn110, Asn133, Asn207, Asn224, Asn231, Asn327, Asn344, Asn351, Asn381, Asn462, Asn561, Asn578, and Asn585. Positions 631–695 constitute an Ig-like C2-type domain; sequence RVKSSVVLTC…YRCEVSNPVS (65 aa).

Belongs to the immunoglobulin superfamily. CEA family. As to expression, expression detected only in placenta.

Its function is as follows. Possibly involved in cell adhesion. This is Cell adhesion molecule CEACAM3 from Rattus norvegicus (Rat).